The chain runs to 343 residues: Uroporphyrinogen decarboxylase (343 aa).

Residues 21–25 (RQAGR), Asp71, Tyr148, Ser203, and His316 each bind substrate.

The protein belongs to the uroporphyrinogen decarboxylase family. As to quaternary structure, homodimer.

It localises to the cytoplasm. The catalysed reaction is uroporphyrinogen III + 4 H(+) = coproporphyrinogen III + 4 CO2. The protein operates within porphyrin-containing compound metabolism; protoporphyrin-IX biosynthesis; coproporphyrinogen-III from 5-aminolevulinate: step 4/4. Functionally, catalyzes the decarboxylation of four acetate groups of uroporphyrinogen-III to yield coproporphyrinogen-III. This chain is Uroporphyrinogen decarboxylase, found in Campylobacter fetus subsp. fetus (strain 82-40).